The following is a 1364-amino-acid chain: Pleckstrin homology domain-containing family H member 1 (1364 aa).

A coiled-coil region spans residues 28 to 169; sequence FRLQASKIRE…VGSLQDALEA (142 aa). Disordered stretches follow at residues 184 to 266, 296 to 321, 356 to 395, 487 to 529, and 546 to 568; these read GAAE…SPPH, GTKT…PGTP, LHPS…ESPK, PFMD…IKRG, and DACS…SSYS. A compositionally biased stretch (polar residues) spans 237-246; the sequence is EDSSSSTVHS. Basic and acidic residues predominate over residues 364–379; sequence LESRARSREEPEKMEM. The segment covering 509–520 has biased composition (polar residues); sequence VPSSESRKTSGL. 2 consecutive PH domains span residues 578 to 672 and 687 to 796; these read SLEK…SLLK and KPTV…VAAG. S745 bears the Phosphoserine mark. The MyTH4 domain occupies 832–986; that stretch reads YSKDGLYASL…PSRMEVVSIL (155 aa). The FERM domain occupies 997-1333; it reads FSIPVHFTNG…NHCTTTVNPP (337 aa).

The polypeptide is Pleckstrin homology domain-containing family H member 1 (PLEKHH1) (Homo sapiens (Human)).